A 468-amino-acid chain; its full sequence is Glutamine synthetase (468 aa).

Positions 11–96 (HDVKWIDLRF…LVCDIIEPST (86 aa)) constitute a GS beta-grasp domain. Residues 104 to 468 (PRAIAHRAEE…PLEYELYYSC (365 aa)) form the GS catalytic domain. Mg(2+)-binding residues include Glu129 and Glu131. Glu207 lines the ATP pocket. Positions 212 and 220 each coordinate Mg(2+). Residues 264–265 (NG) and Gly265 contribute to the L-glutamate site. His269 lines the Mg(2+) pocket. Residues 271 to 273 (HMS) and Ser273 each bind ATP. Residues Arg321, Glu327, and Arg339 each contribute to the L-glutamate site. 3 residues coordinate ATP: Arg339, Arg344, and Arg352. Mg(2+) is bound at residue Glu357. Arg359 is an L-glutamate binding site. An O-AMP-tyrosine modification is found at Tyr397.

Belongs to the glutamine synthetase family. In terms of assembly, oligomer of 12 subunits arranged in the form of two hexagons. The cofactor is Mg(2+). Mn(2+) is required as a cofactor.

It catalyses the reaction L-glutamate + NH4(+) + ATP = L-glutamine + ADP + phosphate + H(+). When cellular nitrogen levels are high, the C-terminal adenylyl transferase (AT) of GlnE inhibits GlnA by covalent transfer of an adenylyl group from ATP to Tyr-397. Conversely, when nitrogen levels are low, the N-terminal adenylyl removase (AR) of GlnE activates GlnA by removing the adenylyl group by phosphorolysis. The fully adenylated enzyme complex is inactive. Functionally, catalyzes the formation of glutamine from glutamate and ammonia. In vitro, can also use hydroxylamine, methylamine and ethylamine, with 32%, 7% and 1% activity compared to ammonia, respectively. In Pseudomonas taetrolens, this protein is Glutamine synthetase.